Consider the following 97-residue polypeptide: Large ribosomal subunit protein uL23 (97 aa).

It belongs to the universal ribosomal protein uL23 family. In terms of assembly, part of the 50S ribosomal subunit. Contacts protein L29, and trigger factor when it is bound to the ribosome.

One of the early assembly proteins it binds 23S rRNA. One of the proteins that surrounds the polypeptide exit tunnel on the outside of the ribosome. Forms the main docking site for trigger factor binding to the ribosome. This is Large ribosomal subunit protein uL23 from Clostridium perfringens (strain SM101 / Type A).